Reading from the N-terminus, the 291-residue chain is Glucose and ribitol dehydrogenase (291 aa).

Positions 1–35 are disordered; sequence MASGGQFPPQKQESQPGKEHLMDPSPQHASPHYKP. 45 to 69 is a binding site for NAD(+); it reads LVTGGDSGIGRSVCYHFALEGATVA. Ser-183 is a substrate binding site. The Proton acceptor role is filled by Tyr-196.

It belongs to the short-chain dehydrogenases/reductases (SDR) family. Expressed in embryogenic cells, somatic embryos and seeds in the later stages of development, but not in non-embryogenic cells and mature leaves.

Functionally, may act as a short alcohol-polyol-sugar dehydrogenase possibly related to carbohydrate metabolism and the acquisition of desiccation tolerance. May also be involved in signal transduction. The protein is Glucose and ribitol dehydrogenase (CAISE5) of Daucus carota (Wild carrot).